The chain runs to 2616 residues: Serine protease ndl (2616 aa).

A signal peptide spans 1–43 (MNYNMDEMEATRLLRHPRRWWSIGFGKRIVAISILVIIVLLFS). A phosphoserine mark is found at S215 and S220. A WIID 1 repeat occupies 261–269 (ISWIIDGHD). An N-linked (GlcNAc...) asparagine glycan is attached at N291. Residues 320 to 328 (ISWILDHFD) form a WIID 2 repeat. N347 carries N-linked (GlcNAc...) asparagine glycosylation. The segment at 352 to 375 (SASSEPIVDTENTNSDHVPTTENG) is disordered. The N-linked (GlcNAc...) asparagine glycan is linked to N379. Residues 399–407 (FDWILDGEE) form a WIID 3 repeat. N417 carries N-linked (GlcNAc...) asparagine glycosylation. WIID repeat units follow at residues 446–454 (FDWIIDGRE) and 477–485 (FDWIIDGEE). N492 and N515 each carry an N-linked (GlcNAc...) asparagine glycan. A WIID 6 repeat occupies 528-536 (FDWIIDGGE). A compositionally biased stretch (low complexity) spans 537-547 (SSGEVSTSSTS). Residues 537 to 574 (SSGEVSTSSTSQPKLTTREAISNPESPRSSHPLDNPTS) are disordered. Positions 548-565 (QPKLTTREAISNPESPRS) are enriched in polar residues. S574 and S581 each carry phosphoserine. Residue N598 is glycosylated (N-linked (GlcNAc...) asparagine). O-linked (Xyl...) (glycosaminoglycan) serine glycosylation is present at S794. The tract at residues 798–817 (GQGANIFSKNASPQKPTNGQ) is disordered. Positions 804–817 (FSKNASPQKPTNGQ) are enriched in polar residues. N827 carries N-linked (GlcNAc...) asparagine glycosylation. S829 carries O-linked (Xyl...) (glycosaminoglycan) serine glycosylation. N-linked (GlcNAc...) asparagine glycosylation occurs at N861. LDL-receptor class A domains are found at residues 889–929 (SRCP…ACTC) and 955–1006 (FGCE…QCSM). Intrachain disulfides connect C891-C905, C899-C918, and C912-C927. The LDL-receptor class A 2; truncated domain maps to 929–956 (CADRVDEERLCDGYEDCPMGEDELGCFG). Intrachain disulfides connect C957-C982, C964-C995, and C989-C1004. N975 carries an N-linked (GlcNAc...) asparagine glycan. Residues 1031–1033 (RGD) carry the Cell attachment site motif. A glycan (N-linked (GlcNAc...) asparagine) is linked at N1064. Phosphoserine occurs at positions 1134 and 1136. Positions 1145-1383 (IVGGSYTSAL…YLDWLEMATT (239 aa)) constitute a Peptidase S1 1 domain. C1170 and C1186 form a disulfide bridge. Residues H1185 and D1233 each act as charge relay system in the active site. 6 cysteine pairs are disulfide-bonded: C1276-C1338, C1305-C1317, C1328-C1359, C1396-C1408, C1401-C1421, and C1415-C1430. S1332 serves as the catalytic Charge relay system. The LDL-receptor class A 4 domain maps to 1394–1432 (QLCPGFICVWGGKRCIAKRQRCDRNVDCLGGEDEVGCTY). N-linked (GlcNAc...) asparagine glycosylation is present at N1445. Disordered regions lie at residues 1530-1557 (FTVS…PSTN) and 1683-1704 (PTTT…HSEK). 2 stretches are compositionally biased toward low complexity: residues 1537 to 1557 (TSPS…PSTN) and 1683 to 1700 (PTTT…SSST). An LDL-receptor class A 5; truncated domain is found at 1713–1743 (FVCKKMSQIVDIMMRCDRKVDCEDGTDELDC). Disulfide bonds link C1728–C1745, C1734–C1764, C1758–C1773, C1776–C1789, C1783–C1802, and C1796–C1811. Residues 1745 to 1775 (CKDYLKGSLKGLICDGKADCEDLTDEQNCVE) form the LDL-receptor class A 6; truncated domain. Residues 1774-1813 (VECQSNEFRCPLSKTCLPLSSRCDNKVDCKFKEDEKDCFA) form the LDL-receptor class A 7 domain. N-linked (GlcNAc...) asparagine glycosylation is found at N1878, N1956, and N2023. The 275-residue stretch at 2027–2301 (LVNEQLHEAI…LQDIIDKPSC (275 aa)) folds into the Peptidase S1 2 domain. C2055 and C2071 are disulfide-bonded. 5 N-linked (GlcNAc...) asparagine glycosylation sites follow: N2144, N2173, N2197, N2237, and N2269. Residues C2177 and C2230 are joined by a disulfide bond. LDL-receptor class A domains follow at residues 2308-2346 (PDCS…KCRQ), 2349-2389 (QQCA…ICSC), and 2419-2459 (CNCT…YCFG). 6 disulfide bridges follow: C2310–C2320, C2315–C2333, C2327–C2344, C2351–C2364, C2358–C2377, and C2371–C2387. Positions 2387 to 2419 (CSCFTYLQATDPSKICDGKRNCWDKSDESSVLC) constitute an LDL-receptor class A 10; truncated domain. N-linked (GlcNAc...) asparagine glycosylation occurs at N2420. Intrachain disulfides connect C2421–C2435, C2428–C2448, and C2442–C2457. Residues N2556 and N2601 are each glycosylated (N-linked (GlcNAc...) asparagine).

Belongs to the peptidase S1 family. In terms of processing, requires cleavage for activation (presumably). Follicle.

The protein resides in the secreted. It localises to the extracellular space. The protein localises to the extracellular matrix. In terms of biological role, component of the extracellular signaling pathway that establishes the dorsal-ventral pathway of the embryo. A protease cascade involving ndl, gd, snk and ea results in activation of the spz Toll receptor ligand; acts upstream of gd, snk and ea and is required for proteolytic processing of gd. Activation of ea requires activation of the ndl-gd-snk protease cascade and sulfation of a vitelline membrane component by pip. Localized activation of the Toll receptor in the ventral region of the embryo defines cell identities along the dorsal-ventral continuum. The chain is Serine protease ndl from Drosophila melanogaster (Fruit fly).